A 186-amino-acid chain; its full sequence is Protein Syd (186 aa).

This sequence belongs to the Syd family.

The protein localises to the cell inner membrane. In terms of biological role, interacts with the SecY protein in vivo. May bind preferentially to an uncomplexed state of SecY, thus functioning either as a chelating agent for excess SecY in the cell or as a regulatory factor that negatively controls the translocase function. The protein is Protein Syd of Pseudoalteromonas atlantica (strain T6c / ATCC BAA-1087).